Here is a 126-residue protein sequence, read N- to C-terminus: UPF0102 protein PMT_0624 (126 aa).

The protein belongs to the UPF0102 family.

The protein is UPF0102 protein PMT_0624 of Prochlorococcus marinus (strain MIT 9313).